The primary structure comprises 360 residues: Phosphoserine aminotransferase (360 aa).

Residue Arg-42 participates in L-glutamate binding. The pyridoxal 5'-phosphate site is built by Trp-102, Thr-152, Asp-171, and Gln-194. Lys-195 is subject to N6-(pyridoxal phosphate)lysine. 237–238 contributes to the pyridoxal 5'-phosphate binding site; it reads NT.

Belongs to the class-V pyridoxal-phosphate-dependent aminotransferase family. SerC subfamily. As to quaternary structure, homodimer. Pyridoxal 5'-phosphate is required as a cofactor.

It localises to the cytoplasm. It catalyses the reaction O-phospho-L-serine + 2-oxoglutarate = 3-phosphooxypyruvate + L-glutamate. The catalysed reaction is 4-(phosphooxy)-L-threonine + 2-oxoglutarate = (R)-3-hydroxy-2-oxo-4-phosphooxybutanoate + L-glutamate. Its pathway is amino-acid biosynthesis; L-serine biosynthesis; L-serine from 3-phospho-D-glycerate: step 2/3. The protein operates within cofactor biosynthesis; pyridoxine 5'-phosphate biosynthesis; pyridoxine 5'-phosphate from D-erythrose 4-phosphate: step 3/5. Functionally, catalyzes the reversible conversion of 3-phosphohydroxypyruvate to phosphoserine and of 3-hydroxy-2-oxo-4-phosphonooxybutanoate to phosphohydroxythreonine. This Coxiella burnetii (strain Dugway 5J108-111) protein is Phosphoserine aminotransferase.